The chain runs to 455 residues: Ribulose bisphosphate carboxylase large chain (455 aa).

Lys5 bears the N6,N6,N6-trimethyllysine mark. Substrate is bound by residues Asn114 and Thr164. Lys166 acts as the Proton acceptor in catalysis. Lys168 is a binding site for substrate. Mg(2+)-binding residues include Lys192, Asp194, and Glu195. Lys192 is subject to N6-carboxylysine. Catalysis depends on His285, which acts as the Proton acceptor. 3 residues coordinate substrate: Arg286, His318, and Ser370.

Belongs to the RuBisCO large chain family. Type I subfamily. In terms of assembly, heterohexadecamer of 8 large chains and 8 small chains. Mg(2+) is required as a cofactor.

Its subcellular location is the plastid. It is found in the chloroplast. It carries out the reaction 2 (2R)-3-phosphoglycerate + 2 H(+) = D-ribulose 1,5-bisphosphate + CO2 + H2O. The catalysed reaction is D-ribulose 1,5-bisphosphate + O2 = 2-phosphoglycolate + (2R)-3-phosphoglycerate + 2 H(+). RuBisCO catalyzes two reactions: the carboxylation of D-ribulose 1,5-bisphosphate, the primary event in carbon dioxide fixation, as well as the oxidative fragmentation of the pentose substrate in the photorespiration process. Both reactions occur simultaneously and in competition at the same active site. This Tamarindus indica (Tamarind) protein is Ribulose bisphosphate carboxylase large chain.